Reading from the N-terminus, the 563-residue chain is MTTLLSFLTSLCSAAIHQAFPELEELTLDITPSTKEHFGHYQCNDAMKLARVLHKSPRAIAESIVAHIPPTPFSSIEIAGAGFINFTFSKEFLASQLQTFSKELANGFRAASPQKVIIDFSSPNIAKDMHVGHLRSTIIGDCLARCFSFVGHDVLRLNHIGDWGTAFGMLITYLQETSQEAIHQLEDLTALYKKAHARFAEDSEFKKRSQHNVVALQSGDAQALALWKQICSVSEKSFQTIYSILDVELHTRGESFYNPFLAEVVADLESKNLVTLSDGAKCVFHEAFSIPLMIQKSDGGYNYATTDVAAMRYRIQQDQADRILIVTDSGQSLHFQLLEATCLAAGYLPSKGIFSHVGFGLVLDTQGRKFKTRSGENIKLRELLDTAVEKAKESLKAHRPDISEEELAYQGPILGINAIKYADLSSHRINDYVFSFEKMLRFEGNTAMSLLYAYVRIQGIKRRMGLESPPQEGPLAVHEPAEEALALTLLRFPEILDLTLRELCPHFLTDYLYALTNKFNAFFRDCHIEGSDSQQERLYLCGLTERTLSTGMHLLGLKTLNHL.

Residues 123–133 carry the 'HIGH' region motif; the sequence is PNIAKDMHVGH.

It belongs to the class-I aminoacyl-tRNA synthetase family. As to quaternary structure, monomer.

The protein localises to the cytoplasm. It catalyses the reaction tRNA(Arg) + L-arginine + ATP = L-arginyl-tRNA(Arg) + AMP + diphosphate. The sequence is that of Arginine--tRNA ligase (argS) from Chlamydia trachomatis serovar D (strain ATCC VR-885 / DSM 19411 / UW-3/Cx).